A 146-amino-acid chain; its full sequence is UPF0178 protein Helmi_09130 (146 aa).

Belongs to the UPF0178 family.

This chain is UPF0178 protein Helmi_09130, found in Heliobacterium modesticaldum (strain ATCC 51547 / Ice1).